Reading from the N-terminus, the 230-residue chain is Sugar fermentation stimulation protein homolog (230 aa).

It belongs to the SfsA family.

The chain is Sugar fermentation stimulation protein homolog from Clostridium botulinum (strain ATCC 19397 / Type A).